The sequence spans 387 residues: 3-ketoacyl-CoA thiolase (387 aa).

Cys-91 (acyl-thioester intermediate) is an active-site residue. Catalysis depends on proton acceptor residues His-343 and Cys-373.

This sequence belongs to the thiolase-like superfamily. Thiolase family. As to quaternary structure, heterotetramer of two alpha chains (FadB) and two beta chains (FadA).

The protein localises to the cytoplasm. The catalysed reaction is an acyl-CoA + acetyl-CoA = a 3-oxoacyl-CoA + CoA. It participates in lipid metabolism; fatty acid beta-oxidation. In terms of biological role, catalyzes the final step of fatty acid oxidation in which acetyl-CoA is released and the CoA ester of a fatty acid two carbons shorter is formed. This Salmonella choleraesuis (strain SC-B67) protein is 3-ketoacyl-CoA thiolase.